The sequence spans 553 residues: Urocanate hydratase (553 aa).

NAD(+)-binding positions include 45–46 (GG), Gln-123, 169–171 (GMG), Asp-189, Arg-194, 235–236 (NA), 256–260 (QTSAH), 266–267 (YV), Tyr-315, and Gly-485.

This sequence belongs to the urocanase family. The cofactor is NAD(+).

The protein localises to the cytoplasm. It carries out the reaction 4-imidazolone-5-propanoate = trans-urocanate + H2O. The protein operates within amino-acid degradation; L-histidine degradation into L-glutamate; N-formimidoyl-L-glutamate from L-histidine: step 2/3. Its function is as follows. Catalyzes the conversion of urocanate to 4-imidazolone-5-propionate. The chain is Urocanate hydratase from Staphylococcus aureus (strain COL).